Here is a 96-residue protein sequence, read N- to C-terminus: Small ribosomal subunit protein bS6 (96 aa).

The protein belongs to the bacterial ribosomal protein bS6 family.

Functionally, binds together with bS18 to 16S ribosomal RNA. The chain is Small ribosomal subunit protein bS6 from Streptococcus gordonii (strain Challis / ATCC 35105 / BCRC 15272 / CH1 / DL1 / V288).